The following is an 88-amino-acid chain: Sec-independent protein translocase protein TatA (88 aa).

A helical transmembrane segment spans residues 1-21 (MGSLSPWHWVVLVVVVVLLFG). Over residues 49–71 (ENQAQASALETPMQNPTVVQSQR) the composition is skewed to polar residues. The tract at residues 49 to 88 (ENQAQASALETPMQNPTVVQSQRVVPPWSTEQDHTEARPA) is disordered. Positions 79 to 88 (EQDHTEARPA) are enriched in basic and acidic residues.

The protein belongs to the TatA/E family. In terms of assembly, the Tat system comprises two distinct complexes: a TatABC complex, containing multiple copies of TatA, TatB and TatC subunits, and a separate TatA complex, containing only TatA subunits. Substrates initially bind to the TatABC complex, which probably triggers association of the separate TatA complex to form the active translocon.

It is found in the cell membrane. Its function is as follows. Part of the twin-arginine translocation (Tat) system that transports large folded proteins containing a characteristic twin-arginine motif in their signal peptide across membranes. TatA could form the protein-conducting channel of the Tat system. This is Sec-independent protein translocase protein TatA from Mycobacterium leprae (strain TN).